The chain runs to 138 residues: Endoribonuclease YbeY (138 aa).

Zn(2+) is bound by residues His106, His110, and Asp116.

This sequence belongs to the endoribonuclease YbeY family. Requires Zn(2+) as cofactor.

Its subcellular location is the cytoplasm. Functionally, single strand-specific metallo-endoribonuclease involved in late-stage 70S ribosome quality control and in maturation of the 3' terminus of the 16S rRNA. The protein is Endoribonuclease YbeY of Phocaeicola vulgatus (strain ATCC 8482 / DSM 1447 / JCM 5826 / CCUG 4940 / NBRC 14291 / NCTC 11154) (Bacteroides vulgatus).